Here is a 5193-residue protein sequence, read N- to C-terminus: Usherin (5193 aa).

The first 34 residues, 1–34 (MHYLALSPGFLCYTIKTLILAYLASVLVLAASQG), serve as a signal peptide directing secretion. Residues 35 to 5033 (VFPRLENVGA…KSTEFYSELW (4999 aa)) are Extracellular-facing. N-linked (GlcNAc...) asparagine glycosylation is found at Asn230, Asn258, Asn274, Asn358, Asn415, Asn448, and Asn469. A Laminin N-terminal domain is found at 268 to 514 (QDFRLYNVSL…AVDEIIVSGR (247 aa)). Cystine bridges form between Cys515–Cys524, Cys517–Cys533, Cys535–Cys546, Cys549–Cys569, Cys572–Cys581, Cys574–Cys602, Cys605–Cys614, Cys617–Cys635, Cys638–Cys652, Cys640–Cys659, Cys661–Cys670, Cys673–Cys688, Cys691–Cys705, Cys693–Cys712, Cys714–Cys723, Cys726–Cys741, Cys744–Cys756, Cys746–Cys763, Cys765–Cys774, Cys777–Cys789, Cys792–Cys805, Cys794–Cys812, Cys814–Cys823, and Cys826–Cys846. Laminin EGF-like domains lie at 515 to 571 (CQCH…NCKP), 572 to 637 (CQCH…ACKL), 638 to 690 (CDCN…GCRP), 691 to 743 (CNCN…GCEP), 744 to 791 (CQCN…ACEV), 792 to 848 (CDCS…NCEK), 853 to 896 (NGSL…GCQA), 897 to 947 (CDCD…GCLP), 948 to 998 (CLCH…RCRP), and 999 to 1049 (CHCH…GCSK). Asn647 carries an N-linked (GlcNAc...) asparagine glycan. 2 N-linked (GlcNAc...) asparagine glycosylation sites follow: Asn836 and Asn853. 14 cysteine pairs are disulfide-bonded: Cys867-Cys876, Cys879-Cys894, Cys897-Cys910, Cys899-Cys917, Cys919-Cys928, Cys931-Cys945, Cys948-Cys960, Cys950-Cys967, Cys969-Cys979, Cys982-Cys996, Cys999-Cys1011, Cys1001-Cys1018, Cys1020-Cys1029, and Cys1032-Cys1047. N-linked (GlcNAc...) asparagine glycosylation is present at Asn885. A glycan (N-linked (GlcNAc...) asparagine) is linked at Asn941. N-linked (GlcNAc...) asparagine glycosylation occurs at Asn1008. Fibronectin type-III domains are found at residues 1055-1143 (PPPR…TKPE), 1147-1241 (GHLN…APPQ), 1242-1357 (TQGP…SVPV), 1358-1462 (FMAP…AAPA), and 1463-1566 (QLRP…LQLK). N-linked (GlcNAc...) asparagine glycans are attached at residues Asn1068, Asn1089, Asn1150, Asn1171, and Asn1222. N-linked (GlcNAc...) asparagine glycans are attached at residues Asn1382, Asn1473, and Asn1626. Laminin G-like domains follow at residues 1511–1700 (TKGT…WEGC) and 1705–1882 (EEGV…QDGC). Cys1663 and Cys1700 form a disulfide bridge. A glycan (N-linked (GlcNAc...) asparagine) is linked at Asn1770. 13 Fibronectin type-III domains span residues 1847–1946 (EPGF…TAPQ), 1948–2045 (VPTP…TPQE), 2046–2132 (APQE…TAQL), 2133–2234 (PPEQ…IPEG), 2235–2321 (VPAP…APPE), 2322–2421 (GVVN…SVEM), 2422–2525 (PPGA…DKPG), 2526–2613 (PIDA…TLPG), 2617–2713 (GIPS…TRPC), 2717–2810 (GVQP…THPA), 2811–2914 (PPQE…TLAG), 2918–3009 (RGAT…MWEE), and 3013–3103 (GMLP…TPSD). Residues Cys1853 and Cys1882 are joined by a disulfide bond. Asn1894 is a glycosylation site (N-linked (GlcNAc...) asparagine). The tract at residues 1931–1955 (VSSDWSRGRTLGTAPQSVPTPSRAQ) is disordered. Over residues 1943-1955 (TAPQSVPTPSRAQ) the composition is skewed to polar residues. Asn1958, Asn2095, Asn2121, Asn2177, Asn2186, Asn2249, Asn2276, Asn2313, Asn2368, and Asn2404 each carry an N-linked (GlcNAc...) asparagine glycan. Asn2575, Asn2647, Asn2701, Asn2761, and Asn2779 each carry an N-linked (GlcNAc...) asparagine glycan. N-linked (GlcNAc...) asparagine glycans are attached at residues Asn2928, Asn2998, Asn3023, Asn3090, Asn3208, Asn3322, and Asn3411. 17 Fibronectin type-III domains span residues 3395 to 3489 (CPAT…TRED), 3490 to 3580 (VPEG…TTQR), 3581 to 3671 (SPEN…TLQA), 3672 to 3766 (APQG…TPED), 3769 to 3857 (PPCN…TLEA), 3858 to 3955 (APVG…TLEA), 3956 to 4059 (PPRG…SAPS), 4060 to 4148 (GLMN…APPD), 4149 to 4256 (TQMA…APPD), 4257 to 4346 (GLSP…TPEV), 4347 to 4437 (PPSE…APPE), 4438 to 4522 (NMDP…TSPS), 4523 to 4625 (APSG…VPPL), 4628 to 4725 (PAPH…TGPA), 4726 to 4818 (PPEG…THPA), 4819 to 4921 (PPSG…TKKE), and 4922 to 5005 (MPQY…YDAA). Residues Asn3589, Asn3645, Asn3686, Asn3712, Asn3723, and Asn3772 are each glycosylated (N-linked (GlcNAc...) asparagine). Asn3976, Asn4063, Asn4194, Asn4218, Asn4304, Asn4340, Asn4365, and Asn4410 each carry an N-linked (GlcNAc...) asparagine glycan. N-linked (GlcNAc...) asparagine glycosylation is found at Asn4556, Asn4575, Asn4683, Asn4716, Asn4746, Asn4756, Asn4765, Asn4915, and Asn4934. A helical transmembrane segment spans residues 5034–5054 (FIMVMAVVGLILLAIFLSLIL). Residues 5055–5193 (QRKIHKEPCI…EHTAFTDTHL (139 aa)) are Cytoplasmic-facing. The PDZ-binding signature appears at 5191–5193 (THL).

In terms of assembly, interacts with collagen IV and fibronectin via its laminin EGF-like domains. Interaction with collagen may be required for stable integration into the basement membrane. Interacts with NINL. Interacts with USH1C. Component of USH2 complex, composed of ADGRV1, PDZD7, USH2A and WHRN. Interacts with ADGRV1/MASS1 (via N-terminal PDZ domain). Interacts (via the cytoplasmic region) with WHRN. Interacts (via the cytoplasmic region) with PDZD7. Interacts (via the cytoplasmic region) with VEZT and MYO7A (via MyTH4-FERM domains); the interaction associates VEZT with the USH2 complex at the stereocilia base. As to expression, present in the testis, epididymis, oviduct, spleen, submaxillary gland, and small and large intestines. Not detected in the brain, skin, lung, skeletal muscle, cardiac muscle, liver or kidney. Expressed in smooth muscle of the colon and the epididymis. Also present in select vascular basement membranes. In the cochlea, it is present in virtually every basement membrane. It is particularly high in the strial capillary basement membranes (SCBMs). In the retina, it is again expressed in all of the basement membranes. It is also very prevalent in the lens capsule and the Bruch's layer between the retinal pigment epithelium and the choroid layer, which is very rich in basement membranes. In neonates in it is widely expressed in the basement membranes of the cochlea. Present in the synaptic terminals of retinal photoreceptors (at protein level).

It is found in the cell projection. It localises to the stereocilium membrane. The protein localises to the photoreceptor inner segment. Its subcellular location is the secreted. Involved in hearing and vision as member of the USH2 complex. In the inner ear, required for the maintenance of hair bundle ankle formation, which connects growing stereocilia in developing cochlear hair cells. In retina photoreceptors, the USH2 complex is required for the maintenance of periciliary membrane complex that seems to play a role in regulating intracellular protein transport. This Mus musculus (Mouse) protein is Usherin (Ush2A).